We begin with the raw amino-acid sequence, 241 residues long: Ribosome-inactivating protein luffaculin 1 (241 aa).

N-linked (GlcNAc...) asparagine glycosylation is found at Asn28, Asn33, Asn77, and Asn84. Glu159 is a catalytic residue. Asn205 carries an N-linked (GlcNAc...) asparagine glycan.

The protein belongs to the ribosome-inactivating protein family. Type 1 RIP subfamily.

It carries out the reaction Endohydrolysis of the N-glycosidic bond at one specific adenosine on the 28S rRNA.. This is Ribosome-inactivating protein luffaculin 1 from Luffa acutangula (Ridged gourd).